A 282-amino-acid polypeptide reads, in one-letter code: Acetyl-coenzyme A carboxylase carboxyl transferase subunit beta (282 aa).

Residues 25–282 (VWRKCPHCNE…SQMLRIFMKQ (258 aa)) enclose the CoA carboxyltransferase N-terminal domain. Zn(2+) contacts are provided by C29, C32, C48, and C51. Residues 29–51 (CPHCNEIIYAKEIERNLNVCPKC) form a C4-type zinc finger.

It belongs to the AccD/PCCB family. Acetyl-CoA carboxylase is a heterohexamer composed of biotin carboxyl carrier protein (AccB), biotin carboxylase (AccC) and two subunits each of ACCase subunit alpha (AccA) and ACCase subunit beta (AccD). The cofactor is Zn(2+).

The protein localises to the cytoplasm. It carries out the reaction N(6)-carboxybiotinyl-L-lysyl-[protein] + acetyl-CoA = N(6)-biotinyl-L-lysyl-[protein] + malonyl-CoA. The protein operates within lipid metabolism; malonyl-CoA biosynthesis; malonyl-CoA from acetyl-CoA: step 1/1. In terms of biological role, component of the acetyl coenzyme A carboxylase (ACC) complex. Biotin carboxylase (BC) catalyzes the carboxylation of biotin on its carrier protein (BCCP) and then the CO(2) group is transferred by the transcarboxylase to acetyl-CoA to form malonyl-CoA. This is Acetyl-coenzyme A carboxylase carboxyl transferase subunit beta from Syntrophotalea carbinolica (strain DSM 2380 / NBRC 103641 / GraBd1) (Pelobacter carbinolicus).